The sequence spans 449 residues: tRNA modification GTPase MnmE (449 aa).

Residues R24, E85, and R124 each coordinate (6S)-5-formyl-5,6,7,8-tetrahydrofolate. Positions 220–369 (GIRTAIAGPP…LEEAIIQAFS (150 aa)) constitute a TrmE-type G domain. N230 is a binding site for K(+). GTP is bound by residues 230–235 (NVGKSS), 249–255 (SNIAGTT), and 274–277 (DTAG). Position 234 (S234) interacts with Mg(2+). S249, I251, and T254 together coordinate K(+). T255 provides a ligand contact to Mg(2+). Position 449 (K449) interacts with (6S)-5-formyl-5,6,7,8-tetrahydrofolate.

Belongs to the TRAFAC class TrmE-Era-EngA-EngB-Septin-like GTPase superfamily. TrmE GTPase family. In terms of assembly, homodimer. Heterotetramer of two MnmE and two MnmG subunits. It depends on K(+) as a cofactor.

The protein resides in the cytoplasm. In terms of biological role, exhibits a very high intrinsic GTPase hydrolysis rate. Involved in the addition of a carboxymethylaminomethyl (cmnm) group at the wobble position (U34) of certain tRNAs, forming tRNA-cmnm(5)s(2)U34. The polypeptide is tRNA modification GTPase MnmE (Akkermansia muciniphila (strain ATCC BAA-835 / DSM 22959 / JCM 33894 / BCRC 81048 / CCUG 64013 / CIP 107961 / Muc)).